A 545-amino-acid chain; its full sequence is MADGVDHIDIYADVEEEFNQESDYPVHDQIDLYDDVISPSANNGDAPEDRDYLDSLPAPGGNEGSKGAPANVVYTYNGKRIALYIGNLTWWTTDEDLTDAIRSIGINDVLEIKFFENRANGQSKGFALVCVGSDSSSRKLMDLLSKRELHGQNPIVTPCNKQSLSQFEMQSRKSTQSGQMSGEGKAGPPGSGSRGGGFPPGKGQRRFPGPPGQGDRFPGPVGPGGPPPHFPGMQGPPRLPSGPPGPLGPPGPPPPGQGLPPPLGGPPNRGDRPPPPVLFPGQFGQPPMGPMPPGPPPPGYGPPPGPPPPQQGPPPPGPFPPRPPGPLGPPLGLAPPPHMQGPPPGGPPPAPHVNPAFFPPPGNNMPSSDGRGPPPGDPYGRPPPYDRDFPGGRDMDASRTPLSEAEFEEIMNRNRAISSSAISRAVSDASAADYGSAIETLVTAISLIKQSKVSADDRCKVLISSLQDCLHGIESKSYGSVAGRRERSRERDHSRSREKSRRHKSRSRDRHEDYYRERSRERDRHRERDRDRERDREREREYRHR.

A disordered region spans residues 37 to 69 (ISPSANNGDAPEDRDYLDSLPAPGGNEGSKGAP). Residues 81 to 161 (IALYIGNLTW…QNPIVTPCNK (81 aa)) enclose the RRM domain. A compositionally biased stretch (polar residues) spans 165 to 180 (SQFEMQSRKSTQSGQM). Disordered regions lie at residues 165-404 (SQFE…PLSE) and 478-545 (YGSV…YRHR). Over residues 184–200 (GKAGPPGSGSRGGGFPP) the composition is skewed to gly residues. Pro residues-rich tracts occupy residues 220-230 (PVGPGGPPPHF), 237-265 (PRLP…PLGG), 287-363 (PMGP…PPGN), and 372-383 (GPPPGDPYGRPP). Composition is skewed to basic and acidic residues over residues 384-397 (PYDR…DMDA) and 483-497 (GRRE…SRSR). Basic residues predominate over residues 498 to 508 (EKSRRHKSRSR). The span at 509-545 (DRHEDYYRERSRERDRHRERDRDRERDREREREYRHR) shows a compositional bias: basic and acidic residues.

Belongs to the RRM CPSF6/7 family. In terms of assembly, component of the cleavage factor Im (CFIm) complex.

Its subcellular location is the nucleus. The protein resides in the nucleoplasm. It is found in the nucleus speckle. The protein localises to the cytoplasm. Functionally, component of the cleavage factor Im (CFIm) complex that functions as an activator of the pre-mRNA 3'-end cleavage and polyadenylation processing required for the maturation of pre-mRNA into functional mRNAs. CFIm contributes to the recruitment of multiprotein complexes on specific sequences on the pre-mRNA 3'-end, so called cleavage and polyadenylation signals (pA signals). Most pre-mRNAs contain multiple pA signals, resulting in alternative cleavage and polyadenylation (APA) producing mRNAs with variable 3'-end formation. The CFIm complex acts as a key regulator of cleavage and polyadenylation site choice during APA through its binding to 5'-UGUA-3' elements localized in the 3'-untranslated region (UTR) for a huge number of pre-mRNAs. Plays a role in mRNA export. The protein is Cleavage and polyadenylation specificity factor subunit 6 of Danio rerio (Zebrafish).